Reading from the N-terminus, the 89-residue chain is uncharacterized protein (89 aa).

The N-terminal stretch at 1–19 (MIVRTLLIAAALLGGTAQA) is a signal peptide.

The protein resides in the secreted. This is an uncharacterized protein from Pseudomonas aeruginosa (strain UCBPP-PA14).